A 173-amino-acid polypeptide reads, in one-letter code: Large ribosomal subunit protein uL10 (173 aa).

Belongs to the universal ribosomal protein uL10 family. As to quaternary structure, part of the ribosomal stalk of the 50S ribosomal subunit. The N-terminus interacts with L11 and the large rRNA to form the base of the stalk. The C-terminus forms an elongated spine to which L12 dimers bind in a sequential fashion forming a multimeric L10(L12)X complex.

In terms of biological role, forms part of the ribosomal stalk, playing a central role in the interaction of the ribosome with GTP-bound translation factors. The sequence is that of Large ribosomal subunit protein uL10 from Acidithiobacillus ferrooxidans (strain ATCC 23270 / DSM 14882 / CIP 104768 / NCIMB 8455) (Ferrobacillus ferrooxidans (strain ATCC 23270)).